The primary structure comprises 486 residues: Aspartyl/glutamyl-tRNA(Asn/Gln) amidotransferase subunit B (486 aa).

The protein belongs to the GatB/GatE family. GatB subfamily. As to quaternary structure, heterotrimer of A, B and C subunits.

It catalyses the reaction L-glutamyl-tRNA(Gln) + L-glutamine + ATP + H2O = L-glutaminyl-tRNA(Gln) + L-glutamate + ADP + phosphate + H(+). The catalysed reaction is L-aspartyl-tRNA(Asn) + L-glutamine + ATP + H2O = L-asparaginyl-tRNA(Asn) + L-glutamate + ADP + phosphate + 2 H(+). Allows the formation of correctly charged Asn-tRNA(Asn) or Gln-tRNA(Gln) through the transamidation of misacylated Asp-tRNA(Asn) or Glu-tRNA(Gln) in organisms which lack either or both of asparaginyl-tRNA or glutaminyl-tRNA synthetases. The reaction takes place in the presence of glutamine and ATP through an activated phospho-Asp-tRNA(Asn) or phospho-Glu-tRNA(Gln). This Orientia tsutsugamushi (strain Boryong) (Rickettsia tsutsugamushi) protein is Aspartyl/glutamyl-tRNA(Asn/Gln) amidotransferase subunit B.